We begin with the raw amino-acid sequence, 248 residues long: Triosephosphate isomerase (248 aa).

Substrate is bound at residue 9 to 11 (NWK). Residue histidine 101 is the Electrophile of the active site. The active-site Proton acceptor is the glutamate 170. Substrate is bound by residues glycine 176, serine 208, and 229-230 (GG).

The protein belongs to the triosephosphate isomerase family. As to quaternary structure, homodimer.

The protein resides in the cytoplasm. It catalyses the reaction D-glyceraldehyde 3-phosphate = dihydroxyacetone phosphate. It functions in the pathway carbohydrate biosynthesis; gluconeogenesis. Its pathway is carbohydrate degradation; glycolysis; D-glyceraldehyde 3-phosphate from glycerone phosphate: step 1/1. In terms of biological role, involved in the gluconeogenesis. Catalyzes stereospecifically the conversion of dihydroxyacetone phosphate (DHAP) to D-glyceraldehyde-3-phosphate (G3P). This chain is Triosephosphate isomerase, found in Mycoplasmopsis pulmonis (strain UAB CTIP) (Mycoplasma pulmonis).